A 2979-amino-acid chain; its full sequence is Polyketide synthase-nonribosomal peptide synthetase TwmB (2979 aa).

The region spanning 5 to 435 (GAEIAIIGSG…GTNAHAILES (431 aa)) is the Ketosynthase family 3 (KS3) domain. Residues cysteine 176, histidine 315, and histidine 355 each act as for beta-ketoacyl synthase activity in the active site. Positions 549 to 864 (VFTGQGAQWA…PYTGLFTRGV (316 aa)) are malonyl-CoA:ACP transacylase (MAT) domain. The active-site For malonyltransferase activity is the serine 643. The segment at 936–1070 (HDLLGHLTPN…GRVRIHLGEA (135 aa)) is N-terminal hotdog fold. The dehydratase (DH) domain stretch occupies residues 936–1234 (HDLLGHLTPN…ECVPFSRQTA (299 aa)). The PKS/mFAS DH domain maps to 936 to 1235 (HDLLGHLTPN…CVPFSRQTAK (300 aa)). Histidine 968 (proton acceptor; for dehydratase activity) is an active-site residue. The C-terminal hotdog fold stretch occupies residues 1085-1235 (LVSVSEKKFY…CVPFSRQTAK (151 aa)). The active-site Proton donor; for dehydratase activity is aspartate 1141. An inactive methyltransferase (MT) domain region spans residues 1387–1572 (NFTAHLAGIL…GIDTSTVEQP (186 aa)). A ketoreductase (KR)domain region spans residues 2098–2271 (TYWLVGLTGG…AASVMDIGAV (174 aa)). Positions 2380–2465 (RNNEEAYGIV…ELVDTATEAI (86 aa)) constitute a Carrier domain. Serine 2425 bears the O-(pantetheine 4'-phosphoryl)serine mark. A disordered region spans residues 2476 to 2497 (YPAEQTSSQNSDSGQDMASSFD). Positions 2479-2497 (EQTSSQNSDSGQDMASSFD) are enriched in polar residues. A condensation region spans residues 2534–2970 (KSIPVSFTQA…MTLGQAALAE (437 aa)).

As to quaternary structure, interacts with TwmE. Pantetheine 4'-phosphate is required as a cofactor.

The catalysed reaction is 5-aminopentanoate + 7 malonyl-CoA + acetyl-CoA + 11 NADPH + 17 H(+) = wortmanamide A + 7 CO2 + 11 NADP(+) + 8 CoA + 6 H2O. The enzyme catalyses 5-aminopentanoate + 8 malonyl-CoA + acetyl-CoA + 13 NADPH + 20 H(+) = wortmanamide B + 8 CO2 + 13 NADP(+) + 9 CoA + 7 H2O. Its pathway is secondary metabolite biosynthesis. Polyketide synthase-nonribosomal peptide synthetase; part of the gene cluster that mediates the biosynthesis of wortmanamides A and B, reduced long-chain polyketides amidated with a specific omega-amino acid, 5-aminopentanoic acid (5PA). The PKS modules of TwmB are involved in the synthesis of the polyketide backbone, whereas the non-canonical C domain of TwmB is a bonafide condensation domain that specifically selects 5PA and catalyzes amidation to release polyketide chain. The C domain clearly prefers C16 and C18 fatty acyl substrates, which is consistent with simultaneous formation of both octaketide and nonaketide acyl amides wortmanamides A and B. Because TwmB lacks a designated enoylreductase (ER) domain, the required activity is provided the enoyl reductase TwmE. The roles of the remaining enzymes have still to be clarified. The sequence is that of Polyketide synthase-nonribosomal peptide synthetase TwmB from Talaromyces wortmannii (Penicillium wortmannii).